The following is a 45-amino-acid chain: uncharacterized protein (45 aa).

This is an uncharacterized protein from Xylella fastidiosa (strain Temecula1 / ATCC 700964).